Consider the following 164-residue polypeptide: Lipoprotein signal peptidase (164 aa).

4 helical membrane-spanning segments follow: residues 11-31 (YWVL…AVLS), 41-61 (VIPS…FSFL), 64-84 (QGGW…AYLV), and 92-112 (FAAL…GNVI). Residues Asp-122 and Asp-140 contribute to the active site. The chain crosses the membrane as a helical span at residues 132–152 (FYPAFNIADSFICVGAVLAVL).

The protein belongs to the peptidase A8 family.

The protein resides in the cell inner membrane. It catalyses the reaction Release of signal peptides from bacterial membrane prolipoproteins. Hydrolyzes -Xaa-Yaa-Zaa-|-(S,diacylglyceryl)Cys-, in which Xaa is hydrophobic (preferably Leu), and Yaa (Ala or Ser) and Zaa (Gly or Ala) have small, neutral side chains.. Its pathway is protein modification; lipoprotein biosynthesis (signal peptide cleavage). Functionally, this protein specifically catalyzes the removal of signal peptides from prolipoproteins. This chain is Lipoprotein signal peptidase, found in Neisseria gonorrhoeae (strain ATCC 700825 / FA 1090).